The primary structure comprises 21 residues: Cupiennin-6b (21 aa).

S21 carries the post-translational modification Serine amide.

In terms of tissue distribution, expressed by the venom gland.

It is found in the secreted. The polypeptide is Cupiennin-6b (Cupiennius salei (American wandering spider)).